Consider the following 433-residue polypeptide: Glutamyl-tRNA reductase (433 aa).

Substrate contacts are provided by residues 49 to 52, Ser-114, 119 to 121, and Gln-125; these read TCNR and EPQ. The active-site Nucleophile is Cys-50. 201–206 serves as a coordination point for NADP(+); the sequence is GAGETI.

Belongs to the glutamyl-tRNA reductase family. As to quaternary structure, homodimer.

The catalysed reaction is (S)-4-amino-5-oxopentanoate + tRNA(Glu) + NADP(+) = L-glutamyl-tRNA(Glu) + NADPH + H(+). The protein operates within porphyrin-containing compound metabolism; protoporphyrin-IX biosynthesis; 5-aminolevulinate from L-glutamyl-tRNA(Glu): step 1/2. Catalyzes the NADPH-dependent reduction of glutamyl-tRNA(Glu) to glutamate 1-semialdehyde (GSA). In Histophilus somni (strain 129Pt) (Haemophilus somnus), this protein is Glutamyl-tRNA reductase.